We begin with the raw amino-acid sequence, 538 residues long: Mitochondria-eating protein (538 aa).

The interval 1–273 (MAENLKRLVS…PRSRSCSRSR (273 aa)) is interaction with YWHAG/14-3-3 protein gamma. Position 85 is a phosphoserine (S85). A disordered region spans residues 92 to 137 (GKPVDSKVPSLQNTFDRERRKDPSPRDRDMQQLDSNLNSTRSQLNQ). Over residues 106-122 (FDRERRKDPSPRDRDMQ) the composition is skewed to basic and acidic residues. Coiled coils occupy residues 118–186 (DRDM…ARHR) and 220–256 (QRDT…RSSR). Over residues 123–137 (QLDSNLNSTRSQLNQ) the composition is skewed to polar residues. A phosphoserine mark is found at S156 and S159. Disordered regions lie at residues 174–227 (LKTL…EVTS) and 247–292 (KSAL…NRSK). 2 stretches are compositionally biased toward basic and acidic residues: residues 181 to 209 (EDAR…RRCE) and 216 to 227 (RNADQRDTEVTS). The span at 253-278 (RSSRSRSPSPAPRSRSCSRSRSASPS) shows a compositional bias: low complexity. 3 positions are modified to phosphoserine: S285, S287, and S509.

This sequence belongs to the MIEAP family. As to quaternary structure, interacts (via coiled-coil domains) with BNIP3L (via BH3 domain). Interacts (via coiled-coil domains) with BNIP3 (via BH3 domain). Interacts with YWHAG/14-3-3 protein gamma; a protein that also plays a role in MALM.

The protein resides in the cytoplasm. It is found in the cytosol. Its subcellular location is the mitochondrion outer membrane. It localises to the mitochondrion matrix. Its function is as follows. Key regulator of mitochondrial quality that mediates the repairing or degradation of unhealthy mitochondria in response to mitochondrial damage. Mediator of mitochondrial protein catabolic process (also named MALM) by mediating the degradation of damaged proteins inside mitochondria by promoting the accumulation in the mitochondrial matrix of hydrolases that are characteristic of the lysosomal lumen. Also involved in mitochondrion degradation of damaged mitochondria by promoting the formation of vacuole-like structures (named MIV), which engulf and degrade unhealthy mitochondria by accumulating lysosomes. The physical interaction of SPATA18/MIEAP, BNIP3 and BNIP3L/NIX at the mitochondrial outer membrane regulates the opening of a pore in the mitochondrial double membrane in order to mediate the translocation of lysosomal proteins from the cytoplasm to the mitochondrial matrix. Binds cardiolipin. May form molecular condensates (non-membrane-bounded organelles) within mitochondria that compartmentalize and promote cardiolipin metabolism. The sequence is that of Mitochondria-eating protein (SPATA18) from Macaca fascicularis (Crab-eating macaque).